Consider the following 545-residue polypeptide: Methionine--tRNA ligase (545 aa).

A 'HIGH' region motif is present at residues 15–25 (PYANGPIHLGH). Residues Cys-146, Cys-149, Cys-159, and Cys-162 each coordinate Zn(2+). The 'KMSKS' region motif lies at 332-336 (KMSKS). Lys-335 serves as a coordination point for ATP.

Belongs to the class-I aminoacyl-tRNA synthetase family. MetG type 1 subfamily. In terms of assembly, monomer. The cofactor is Zn(2+).

It localises to the cytoplasm. The enzyme catalyses tRNA(Met) + L-methionine + ATP = L-methionyl-tRNA(Met) + AMP + diphosphate. In terms of biological role, is required not only for elongation of protein synthesis but also for the initiation of all mRNA translation through initiator tRNA(fMet) aminoacylation. This is Methionine--tRNA ligase from Hamiltonella defensa subsp. Acyrthosiphon pisum (strain 5AT).